The sequence spans 937 residues: Alanine--tRNA ligase (937 aa).

Zn(2+) is bound by residues histidine 626, histidine 630, cysteine 727, and histidine 731.

Belongs to the class-II aminoacyl-tRNA synthetase family. Requires Zn(2+) as cofactor.

Its subcellular location is the cytoplasm. It catalyses the reaction tRNA(Ala) + L-alanine + ATP = L-alanyl-tRNA(Ala) + AMP + diphosphate. Catalyzes the attachment of alanine to tRNA(Ala) in a two-step reaction: alanine is first activated by ATP to form Ala-AMP and then transferred to the acceptor end of tRNA(Ala). Also edits incorrectly charged Ser-tRNA(Ala) and Gly-tRNA(Ala) via its editing domain. The protein is Alanine--tRNA ligase of Opitutus terrae (strain DSM 11246 / JCM 15787 / PB90-1).